The chain runs to 192 residues: Elongation factor P (192 aa).

This sequence belongs to the elongation factor P family.

It localises to the cytoplasm. It participates in protein biosynthesis; polypeptide chain elongation. In terms of biological role, involved in peptide bond synthesis. Stimulates efficient translation and peptide-bond synthesis on native or reconstituted 70S ribosomes in vitro. Probably functions indirectly by altering the affinity of the ribosome for aminoacyl-tRNA, thus increasing their reactivity as acceptors for peptidyl transferase. The sequence is that of Elongation factor P from Borrelia hermsii (strain HS1 / DAH).